The primary structure comprises 91 residues: Signal recognition particle 19 kDa protein (91 aa).

Belongs to the SRP19 family. As to quaternary structure, part of the signal recognition particle protein translocation system, which is composed of SRP and FtsY. Archaeal SRP consists of a 7S RNA molecule of 300 nucleotides and two protein subunits: SRP54 and SRP19.

It is found in the cytoplasm. Functionally, involved in targeting and insertion of nascent membrane proteins into the cytoplasmic membrane. Binds directly to 7S RNA and mediates binding of the 54 kDa subunit of the SRP. This is Signal recognition particle 19 kDa protein from Methanoregula boonei (strain DSM 21154 / JCM 14090 / 6A8).